The sequence spans 1252 residues: DNA-directed RNA polymerase subunit beta (1252 aa).

The protein belongs to the RNA polymerase beta chain family. The RNAP catalytic core consists of 2 alpha, 1 beta, 1 beta' and 1 omega subunit. When a sigma factor is associated with the core the holoenzyme is formed, which can initiate transcription.

The enzyme catalyses RNA(n) + a ribonucleoside 5'-triphosphate = RNA(n+1) + diphosphate. Functionally, DNA-dependent RNA polymerase catalyzes the transcription of DNA into RNA using the four ribonucleoside triphosphates as substrates. The polypeptide is DNA-directed RNA polymerase subunit beta (Chlamydia trachomatis serovar L2 (strain ATCC VR-902B / DSM 19102 / 434/Bu)).